The following is a 400-amino-acid chain: Probable peptidoglycan glycosyltransferase FtsW (400 aa).

Over 1–24 (MSTGSLPLGLPSRDSLDGLRNSVD) the chain is Cytoplasmic. A helical transmembrane segment spans residues 25 to 45 (LPLLAAAALLLGLGLIMVASA). The Periplasmic portion of the chain corresponds to 46 to 63 (SMDLGERYYGNTWHFFQR). The helical transmembrane segment at 64–84 (QVLFAAIGLALATVMWAIPLE) threads the bilayer. Residues 85–88 (RWER) are Cytoplasmic-facing. A helical membrane pass occupies residues 89 to 109 (AGPWLLILVMVLLIAVLLPGV). Residues 110 to 118 (GRTVNGATR) lie on the Periplasmic side of the membrane. A helical membrane pass occupies residues 119–139 (WIPIGMFNLQVAEPVKLLVVM). The Cytoplasmic portion of the chain corresponds to 140–153 (YLAGYIVRHYSALR). The chain crosses the membrane as a helical span at residues 154 to 174 (LHLRGFVRPLVVLGFGTVLLL). Residues 175–177 (LQP) lie on the Periplasmic side of the membrane. Residues 178–198 (DFGGAAIMLAIGMGMLFLAGA) traverse the membrane as a helical segment. Lysine 199 is a topological domain (cytoplasmic). The chain crosses the membrane as a helical span at residues 200-220 (LWQFAALGATIAVGMAFVAVA). The Periplasmic portion of the chain corresponds to 221–278 (APYRVARLTAFLDPWQDPFATGFQLTQSLIAIGSGGWFGTGLGNSVQKLFYLPEAHND). Residues 279–299 (FLFAVFAEEFGFIGVLALIAL) form a helical membrane-spanning segment. Residues 300–324 (FAVVVWRCVKIGLWAERAGHAFGSH) lie on the Cytoplasmic side of the membrane. The chain crosses the membrane as a helical span at residues 325 to 345 (LAFGVAIWLALQSALNLAVNM). Topologically, residues 346–354 (GLLPTKGMT) are periplasmic. The helical transmembrane segment at 355–375 (LPFLSYGGSSLIVTLMAIGLV) threads the bilayer. The Cytoplasmic portion of the chain corresponds to 376-400 (MRVYREAQIPAPRQSTPPRRKRGQA).

It belongs to the SEDS family. FtsW subfamily.

The protein resides in the cell inner membrane. It catalyses the reaction [GlcNAc-(1-&gt;4)-Mur2Ac(oyl-L-Ala-gamma-D-Glu-L-Lys-D-Ala-D-Ala)](n)-di-trans,octa-cis-undecaprenyl diphosphate + beta-D-GlcNAc-(1-&gt;4)-Mur2Ac(oyl-L-Ala-gamma-D-Glu-L-Lys-D-Ala-D-Ala)-di-trans,octa-cis-undecaprenyl diphosphate = [GlcNAc-(1-&gt;4)-Mur2Ac(oyl-L-Ala-gamma-D-Glu-L-Lys-D-Ala-D-Ala)](n+1)-di-trans,octa-cis-undecaprenyl diphosphate + di-trans,octa-cis-undecaprenyl diphosphate + H(+). Its pathway is cell wall biogenesis; peptidoglycan biosynthesis. In terms of biological role, peptidoglycan polymerase that is essential for cell division. This Thioalkalivibrio sp. (strain K90mix) protein is Probable peptidoglycan glycosyltransferase FtsW.